A 160-amino-acid chain; its full sequence is MHILKKPDLSDPKMRAKLAKGMGHNYYGEPAWPNDLLYIFPVVILGTIACIVGLAVLDPAMLADKADPFATPLEILPEWYLYPVFQILRVVPNKLLGIALQTLVPLGLMLVPFIESFNKFQNPFRRPVAMTVFLFGTVTTIYLGIGAALPIDKSLTLGLF.

Helical transmembrane passes span 36–56, 95–115, and 131–151; these read LLYI…GLAV, LLGI…PFIE, and TVFL…ALPI.

This sequence belongs to the cytochrome b family. PetD subfamily. The 4 large subunits of the cytochrome b6-f complex are cytochrome b6, subunit IV (17 kDa polypeptide, PetD), cytochrome f and the Rieske protein, while the 4 small subunits are PetG, PetL, PetM and PetN. The complex functions as a dimer.

It is found in the cellular thylakoid membrane. Its function is as follows. Component of the cytochrome b6-f complex, which mediates electron transfer between photosystem II (PSII) and photosystem I (PSI), cyclic electron flow around PSI, and state transitions. This chain is Cytochrome b6-f complex subunit 4, found in Parasynechococcus marenigrum (strain WH8102).